The following is a 245-amino-acid chain: tRNA (guanine-N(1)-)-methyltransferase (245 aa).

S-adenosyl-L-methionine contacts are provided by residues Gly111 and 131–136 (MGDYVL).

The protein belongs to the RNA methyltransferase TrmD family. Homodimer.

The protein resides in the cytoplasm. The enzyme catalyses guanosine(37) in tRNA + S-adenosyl-L-methionine = N(1)-methylguanosine(37) in tRNA + S-adenosyl-L-homocysteine + H(+). Its function is as follows. Specifically methylates guanosine-37 in various tRNAs. The polypeptide is tRNA (guanine-N(1)-)-methyltransferase (Staphylococcus aureus (strain Mu3 / ATCC 700698)).